Here is a 60-residue protein sequence, read N- to C-terminus: Anionic antimicrobial peptide 2 (60 aa).

In terms of tissue distribution, hemolymph.

The protein localises to the secreted. Functionally, antimicrobial protein. Has antibacterial activity against the Gram-positive bacteria M.luteus (MIC=86.6 uM), L.monocytogenes (MIC=86.6 uM), and S.lutea (MIC=86.6 uM). Lacks antibacterial activity against the Gram-positive bacteria B.circulans and S.aureus, and the Gram-negative bacteria E.coli D31, E.coli ATCC 25922, and S.typhimurium. Has antifungal activity against P.pastoris (MIC=86.6 uM) and P.stipitis (MIC=90.9 uM), but lacks antifungal activity against A.niger, C.albicans, C.albidus, C.fructus, C.wickerhamii, F.oxysporum, S.cerevisiae, S.pombe, T.harzianum, and Z.marxianus. The chain is Anionic antimicrobial peptide 2 from Galleria mellonella (Greater wax moth).